The chain runs to 211 residues: NADH-quinone oxidoreductase subunit I 1 (211 aa).

4Fe-4S ferredoxin-type domains follow at residues Leu-50–Ala-80 and Arg-96–Glu-125. Residues Cys-60, Cys-63, Cys-66, Cys-70, Cys-105, Cys-108, Cys-111, and Cys-115 each coordinate [4Fe-4S] cluster. Residues Gln-192–Arg-211 form a disordered region.

Belongs to the complex I 23 kDa subunit family. In terms of assembly, NDH-1 is composed of 14 different subunits. Subunits NuoA, H, J, K, L, M, N constitute the membrane sector of the complex. [4Fe-4S] cluster serves as cofactor.

Its subcellular location is the cell membrane. The enzyme catalyses a quinone + NADH + 5 H(+)(in) = a quinol + NAD(+) + 4 H(+)(out). NDH-1 shuttles electrons from NADH, via FMN and iron-sulfur (Fe-S) centers, to quinones in the respiratory chain. The immediate electron acceptor for the enzyme in this species is believed to be ubiquinone. Couples the redox reaction to proton translocation (for every two electrons transferred, four hydrogen ions are translocated across the cytoplasmic membrane), and thus conserves the redox energy in a proton gradient. The sequence is that of NADH-quinone oxidoreductase subunit I 1 from Streptomyces coelicolor (strain ATCC BAA-471 / A3(2) / M145).